We begin with the raw amino-acid sequence, 367 residues long: Pectate lyase 1 (367 aa).

The signal sequence occupies residues 1–21; that stretch reads MASPCLIAFLVFLCAIVSCCS. Cystine bridges form between C28/C45 and C128/C147. The N-linked (GlcNAc...) asparagine glycan is linked to N148. Residue D170 coordinates Ca(2+). Residue N178 is glycosylated (N-linked (GlcNAc...) asparagine). The Ca(2+) site is built by D194 and D198. R250 is a catalytic residue. The cysteines at positions 306 and 312 are disulfide-linked.

Belongs to the polysaccharide lyase 1 family. Amb a subfamily. Requires Ca(2+) as cofactor.

It catalyses the reaction Eliminative cleavage of (1-&gt;4)-alpha-D-galacturonan to give oligosaccharides with 4-deoxy-alpha-D-galact-4-enuronosyl groups at their non-reducing ends.. Its pathway is glycan metabolism; pectin degradation; 2-dehydro-3-deoxy-D-gluconate from pectin: step 2/5. Its function is as follows. Has pectate lyase activity. The chain is Pectate lyase 1 from Juniperus virginiana (Eastern redcedar).